A 353-amino-acid polypeptide reads, in one-letter code: DNA polymerase IV (353 aa).

The region spanning 4–185 is the UmuC domain; it reads IIHVDMDCFF…LPLSKIPGVG (182 aa). Aspartate 8 and aspartate 103 together coordinate Mg(2+). Glutamate 104 is an active-site residue.

It belongs to the DNA polymerase type-Y family. Monomer. The cofactor is Mg(2+).

Its subcellular location is the cytoplasm. The catalysed reaction is DNA(n) + a 2'-deoxyribonucleoside 5'-triphosphate = DNA(n+1) + diphosphate. In terms of biological role, poorly processive, error-prone DNA polymerase involved in untargeted mutagenesis. Copies undamaged DNA at stalled replication forks, which arise in vivo from mismatched or misaligned primer ends. These misaligned primers can be extended by PolIV. Exhibits no 3'-5' exonuclease (proofreading) activity. May be involved in translesional synthesis, in conjunction with the beta clamp from PolIII. This chain is DNA polymerase IV, found in Serratia proteamaculans (strain 568).